A 94-amino-acid chain; its full sequence is Small ribosomal subunit protein uS19 (94 aa).

The protein belongs to the universal ribosomal protein uS19 family.

In terms of biological role, protein S19 forms a complex with S13 that binds strongly to the 16S ribosomal RNA. This is Small ribosomal subunit protein uS19 from Clostridium botulinum (strain Langeland / NCTC 10281 / Type F).